The following is a 460-amino-acid chain: Lysosomal proton-coupled steroid conjugate and bile acid symporter SLC46A3 (460 aa).

An N-terminal signal peptide occupies residues 1–25; that stretch reads MKISFIEPAILLNAFAMTLTIPLTA. Residues 26–73 are Extracellular-facing; that stretch reads QYVYRRIWEETGNYTFASNSNGSECDQNKSSSIFAFREEVQKKASLFN. N-linked (GlcNAc...) asparagine glycans are attached at residues Asn-38, Asn-46, and Asn-53. The chain crosses the membrane as a helical span at residues 74–94; it reads LQVEMSALIPGLVSTFMLLAS. The Cytoplasmic portion of the chain corresponds to 95–111; it reads SDNHGRKLPMVLSSLGS. Residues 112–132 form a helical membrane-spanning segment; sequence LGTNTWLCMMSYFDLPLQLLI. The Extracellular segment spans residues 133-135; sequence AST. Residues 136-156 form a helical membrane-spanning segment; sequence FIGALFGNYTTFWGACFAYIV. Residues 157–170 are Cytoplasmic-facing; that stretch reads DQQKEYKHRIIRIA. A helical transmembrane segment spans residues 171-191; the sequence is ILDFMLGVVTGLTGLSSGYFI. Residues 192–195 lie on the Extracellular side of the membrane; sequence RELG. Residues 196–216 form a helical membrane-spanning segment; that stretch reads FVWSYFITAMVLIVNLAYILF. The Cytoplasmic segment spans residues 217–257; the sequence is FLNDPIKESSSQIVTMSCIESLKDLFYRTYMLFKNGSSKRQ. Residues 258 to 278 traverse the membrane as a helical segment; that stretch reads ALLCLLIFTLVIYFFVIIGIS. At 279–301 the chain is on the extracellular side; that stretch reads PIFTLYELGPPLCWNEVYIGYGS. Residues 302-322 traverse the membrane as a helical segment; it reads ALGSVSFLSSFLGIWLFSYCL. The Cytoplasmic segment spans residues 323–324; sequence KD. Residues 325-345 traverse the membrane as a helical segment; sequence IHIAYIGIFTTMVGMTLAAFT. The Extracellular segment spans residues 346-347; sequence RT. A helical membrane pass occupies residues 348 to 368; it reads TLMMFLVRIPFIFTIMPLSVL. Topologically, residues 369–381 are cytoplasmic; sequence RSMLSKVVHSTEQ. A helical transmembrane segment spans residues 382-402; the sequence is GALFACIAFLETLAGVTSTSA. Residues 403 to 410 lie on the Extracellular side of the membrane; sequence YSGIYSAT. Residues 411-431 traverse the membrane as a helical segment; sequence VAWYPGFIFLLSAGLLVLPAI. Over 432–460 the chain is Cytoplasmic; it reads SLCCVKSIGWEEGSYTLLVHEEPSEHTSD. The Tyrosine-based lysosomal-sorting motif signature appears at 446 to 449; the sequence is YTLL.

Belongs to the major facilitator superfamily. SLC46A family. In terms of tissue distribution, expressed in liver, kidney, small intestine and colon.

Its subcellular location is the lysosome membrane. The catalysed reaction is estrone 3-sulfate(out) + n H(+)(out) = estrone 3-sulfate(in) + n H(+)(in). The enzyme catalyses 25-hydroxyvitamin D3 sulfate(out) + n H(+)(out) = 25-hydroxyvitamin D3 sulfate(in) + n H(+)(in). It carries out the reaction cholate(out) + n H(+)(out) = cholate(in) + n H(+)(in). It catalyses the reaction glycocholate(out) + n H(+)(out) = glycocholate(in) + n H(+)(in). The catalysed reaction is taurocholate(out) + n H(+)(out) = taurocholate(in) + n H(+)(in). The enzyme catalyses dehydroepiandrosterone 3-sulfate(out) + n H(+)(out) = dehydroepiandrosterone 3-sulfate(in) + n H(+)(in). It carries out the reaction N-acetyl-D-muramoyl-L-alanyl-D-isoglutamine(out) + n H(+)(out) = N-acetyl-D-muramoyl-L-alanyl-D-isoglutamine(in) + n H(+)(in). It catalyses the reaction 2',3'-cGAMP(out) + n H(+)(out) = 2',3'-cGAMP(in) + n H(+)(in). Functionally, lysosomal proton-coupled steroid conjugate and bile acid transporter. Preferentially recognizes lipophilic steroid conjugates or bile acis as endogenous substrates and seems to mediate escape from lysosomes to the cytoplasm. Modulates hepatic cytosolic copper homeostasis, maybe acting as a lysosomal copper transporter and sequestering copper ions in the lysosome. Delivers pathogen-associated molecular patterns to cytosolic pattern recognition receptors as part of the innate immune response to microbes. Selectively transports bacterial muramyl dipeptide (MDP) into the cytosol for recognition by NOD2, triggering inflammatory responses. Likely acts as a redundant importer of cyclic GMP-AMP dinucleotides (cGAMPs) in monocyte and macrophage cell lineages. The transport mechanism, its electrogenicity and stoichiometry remain to be elucidated. This chain is Lysosomal proton-coupled steroid conjugate and bile acid symporter SLC46A3 (Slc46a3), found in Mus musculus (Mouse).